The sequence spans 640 residues: MSRTLTPLLDRVCEPQDLRAFPESDLARLADELRAETIDVVSVTGGHLGAGLGVIELTVALHYVFNTPEDRIIWDVGHQAYPHKILTGRREKIRTLRQEGGLSGFTKRSESVYDPFGAGHSSTSISAGLGMAVASALKAEKRRNIVAVIGDGAMSAGMAYEAMNNAGALNARLIVVLNDNDMSIAPPTGAMSAHLARLVSRPAYRSLRERVKVLGEKLPKFFLDKARRSEEFARGFLVGGTLFEELGFYYVGPIDGHNLKHLLPVLKNVREYPTGPVLIHVVTHKGKGYAPAEASLDKYHGVNRFDIITGKQVKASSNVLPYTKVFSKALREEASYDDKIVAITAAMPTGTGLDFFAEKFPERMFDVGIAEQHAVTFAAGMACEGYKPFVAIYSTFLQRAYDQIIHDVSIQKLPVRFAIDRAGFVGADGATHAGSFDIVFLTTLPEFVVMAPSDEVELMHMVRTAAAYDQGPISFRYPRGEGIGMDLPQRGEILEIGKGRILHEGNRIALVCFGTRISEVLVAADELSAEGLSTTVADARFAKPLDKDLMRRLAREHEVLVTIEEGAIGGFGAHLLQFLAQEGLLEHGLKVRTLKLPDEYLNHGSQEKVLSRIGLDAVGIVNTVFSALGRKIRTVQRVRV.

Residues histidine 78 and 119–121 (GHS) contribute to the thiamine diphosphate site. A Mg(2+)-binding site is contributed by aspartate 151. Thiamine diphosphate-binding positions include 152-153 (GA), asparagine 180, tyrosine 289, and glutamate 371. Asparagine 180 is a Mg(2+) binding site.

The protein belongs to the transketolase family. DXPS subfamily. Homodimer. Mg(2+) is required as a cofactor. It depends on thiamine diphosphate as a cofactor.

It carries out the reaction D-glyceraldehyde 3-phosphate + pyruvate + H(+) = 1-deoxy-D-xylulose 5-phosphate + CO2. It participates in metabolic intermediate biosynthesis; 1-deoxy-D-xylulose 5-phosphate biosynthesis; 1-deoxy-D-xylulose 5-phosphate from D-glyceraldehyde 3-phosphate and pyruvate: step 1/1. Its function is as follows. Catalyzes the acyloin condensation reaction between C atoms 2 and 3 of pyruvate and glyceraldehyde 3-phosphate to yield 1-deoxy-D-xylulose-5-phosphate (DXP). In Bartonella henselae (strain ATCC 49882 / DSM 28221 / CCUG 30454 / Houston 1) (Rochalimaea henselae), this protein is 1-deoxy-D-xylulose-5-phosphate synthase.